Consider the following 806-residue polypeptide: NADH-quinone oxidoreductase subunit G (806 aa).

In terms of domain architecture, 2Fe-2S ferredoxin-type spans 15 to 93 (EMVTLTIDGV…DMVVRTQLTS (79 aa)). C49, C60, C63, and C77 together coordinate [2Fe-2S] cluster. The 4Fe-4S His(Cys)3-ligated-type domain occupies 95 to 134 (IADKAQHGVMELLLINHPLDCPMCDKGGECPLQNQAMSNG). Residues H111, C115, C118, C124, C164, C167, C170, C214, C240, C243, C247, and C275 each coordinate [4Fe-4S] cluster. One can recognise a 4Fe-4S Mo/W bis-MGD-type domain in the interval 233–289 (LVSSPSVCEHCASGCAQRTDHRRGKVLRRLAGDDPEVNEEWNCDKGRWAFTYATQPD).

The protein belongs to the complex I 75 kDa subunit family. The cofactor is [2Fe-2S] cluster. Requires [4Fe-4S] cluster as cofactor.

The enzyme catalyses a quinone + NADH + 5 H(+)(in) = a quinol + NAD(+) + 4 H(+)(out). Functionally, NDH-1 shuttles electrons from NADH, via FMN and iron-sulfur (Fe-S) centers, to quinones in the respiratory chain. The immediate electron acceptor for the enzyme in this species is believed to be menaquinone. Couples the redox reaction to proton translocation (for every two electrons transferred, four hydrogen ions are translocated across the cytoplasmic membrane), and thus conserves the redox energy in a proton gradient. This chain is NADH-quinone oxidoreductase subunit G (nuoG), found in Mycobacterium bovis (strain ATCC BAA-935 / AF2122/97).